The sequence spans 142 residues: Large ribosomal subunit protein uL11 (142 aa).

The protein belongs to the universal ribosomal protein uL11 family. In terms of assembly, part of the ribosomal stalk of the 50S ribosomal subunit. Interacts with L10 and the large rRNA to form the base of the stalk. L10 forms an elongated spine to which L12 dimers bind in a sequential fashion forming a multimeric L10(L12)X complex. One or more lysine residues are methylated.

Its function is as follows. Forms part of the ribosomal stalk which helps the ribosome interact with GTP-bound translation factors. This chain is Large ribosomal subunit protein uL11, found in Photorhabdus laumondii subsp. laumondii (strain DSM 15139 / CIP 105565 / TT01) (Photorhabdus luminescens subsp. laumondii).